The chain runs to 61 residues: DNA-directed RNA polymerase subunit 12-like protein (61 aa).

The Zn(2+) site is built by cysteine 21, cysteine 24, cysteine 38, and cysteine 41.

This sequence belongs to the archaeal Rpo12/eukaryotic RPC10 RNA polymerase subunit family.

It localises to the nucleus. In Arabidopsis thaliana (Mouse-ear cress), this protein is DNA-directed RNA polymerase subunit 12-like protein (NRPB12L).